The chain runs to 102 residues: MNREITFFGRFEADILADRKTITIRDSSESDFRSGEVLRVCRNEDGVFFCHIKVKSVTPVTLDGLSERHAEQENMSLDELKKVIKAIYPGLDRFYVIEFTRC.

One can recognise an ASCH domain in the interval Thr6–Asp92. Lys20 (proton acceptor) is an active-site residue. Thr23 functions as the Nucleophile in the catalytic mechanism. Catalysis depends on Glu73, which acts as the Proton donor.

This sequence belongs to the N(4)-acetylcytidine amidohydrolase family.

The enzyme catalyses N(4)-acetylcytidine + H2O = cytidine + acetate + H(+). It carries out the reaction N(4)-acetyl-2'-deoxycytidine + H2O = 2'-deoxycytidine + acetate + H(+). It catalyses the reaction N(4)-acetylcytosine + H2O = cytosine + acetate + H(+). Catalyzes the hydrolysis of N(4)-acetylcytidine (ac4C). The protein is N(4)-acetylcytidine amidohydrolase of Yersinia pseudotuberculosis serotype O:1b (strain IP 31758).